The chain runs to 975 residues: Protein bicaudal D homolog 1 (975 aa).

2 coiled-coil regions span residues 1-265 (MAAE…HISI) and 319-496 (SELN…IANE). 5 disordered regions span residues 383 to 403 (SSKE…GEEA), 545 to 616 (RSGS…LDTS), 800 to 824 (DHEQ…VSGE), 836 to 877 (LLHS…ASYL), and 922 to 975 (DCQQ…PPHP). 2 stretches are compositionally biased toward basic and acidic residues: residues 385–403 (KELK…GEEA) and 581–590 (VAKESTEASK). Residues 592–602 (PSPTKTPTISP) are compositionally biased toward polar residues. The stretch at 663-803 (IDKDKEALME…LEDLEFDHEQ (141 aa)) forms a coiled coil. Residues 663-803 (IDKDKEALME…LEDLEFDHEQ (141 aa)) are interaction with RAB6A. Over residues 840–877 (QGPQTPNIRVSSGTQRKRQFSPSLCDQSRPRTSGASYL) the composition is skewed to polar residues.

This sequence belongs to the BicD family. In terms of assembly, interacts with RAB6A. Interacts (via C-terminus) with RAB6B (GTP-bound); the interaction is direct. Interacts with CLIP-115 and KIFC2. (Microbial infection) Interacts with human cytomegalovirus/HHV-5 protein UL32. Expressed in the brain, heart and skeletal muscle.

It is found in the golgi apparatus. Functionally, regulates coat complex coatomer protein I (COPI)-independent Golgi-endoplasmic reticulum transport by recruiting the dynein-dynactin motor complex. The protein is Protein bicaudal D homolog 1 (BICD1) of Homo sapiens (Human).